Reading from the N-terminus, the 532-residue chain is Developmental and secondary metabolism regulator ve1 (532 aa).

One can recognise a Velvet domain in the interval 26-220 (NRSLWYQLTV…ADQGCRVRIR (195 aa)). Positions 40–45 (ERARAC) match the Nuclear localization signal motif. A compositionally biased stretch (basic residues) spans 217–229 (VRIRRDVRMRKRD). 2 disordered regions span residues 217-440 (VRIR…TEPS) and 458-520 (PQVD…RADG). Over residues 233–250 (GGNNNNNNNAGNNAGNNG) the composition is skewed to low complexity. 2 stretches are compositionally biased toward basic and acidic residues: residues 251-260 (FERREEDFGR) and 283-294 (SEHRASYSDVSR). Pro residues predominate over residues 302–317 (YPPPPPPPPSYDPTPS). Residues 397 to 411 (STSTYVPPSPSVYST) are compositionally biased toward low complexity. The segment at 435–463 (MNTEPSRGSIKISALVEPMPVIEPQVDPL) is PEST. Positions 481 to 493 (FAQNTRPLFNGQR) are enriched in polar residues.

It belongs to the velvet family. VeA subfamily. In terms of assembly, component of the heterotrimeric velvet complex composed of laeA, ve1 and velB; Ve1 acting as a bridging protein between laeA and velB. Interacts directly with laeA and velB.

The protein localises to the nucleus. Its subcellular location is the cytoplasm. Functionally, component of the velvet transcription factor complex that controls sexual/asexual developmental ratio in response to light, promoting sexual development in the darkness while stimulating asexual sporulation under illumination. The velvet complex hat acts as a global regulator for secondary metabolite gene expression. Controls the expression of the aurofusarin and trichothecene gene clusters. Also controls the expression of the deoxynivalenol (DON) gene cluster. Regulates hyphal growth and pigment formation. Acts as a positive regulator of virulence. The protein is Developmental and secondary metabolism regulator ve1 of Gibberella zeae (strain ATCC MYA-4620 / CBS 123657 / FGSC 9075 / NRRL 31084 / PH-1) (Wheat head blight fungus).